The chain runs to 473 residues: Photosystem II CP43 reaction center protein (473 aa).

The propeptide occupies 1–14 (MKTLYSLRRFYHVE). Position 15 is an N-acetylthreonine (T15). T15 is subject to Phosphothreonine. The next 5 helical transmembrane spans lie at 69-93 (LFEV…PHLA), 134-155 (LLGP…KDRN), 178-200 (KASY…RKIT), 255-275 (KPFA…LSYS), and 291-312 (WFNN…ASQA). E367 serves as a coordination point for [CaMn4O5] cluster. Residues 447–471 (RARAAAAGFEKGIDRDFEPVLSMTP) traverse the membrane as a helical segment.

This sequence belongs to the PsbB/PsbC family. PsbC subfamily. PSII is composed of 1 copy each of membrane proteins PsbA, PsbB, PsbC, PsbD, PsbE, PsbF, PsbH, PsbI, PsbJ, PsbK, PsbL, PsbM, PsbT, PsbX, PsbY, PsbZ, Psb30/Ycf12, at least 3 peripheral proteins of the oxygen-evolving complex and a large number of cofactors. It forms dimeric complexes. It depends on Binds multiple chlorophylls and provides some of the ligands for the Ca-4Mn-5O cluster of the oxygen-evolving complex. It may also provide a ligand for a Cl- that is required for oxygen evolution. PSII binds additional chlorophylls, carotenoids and specific lipids. as a cofactor.

The protein resides in the plastid. It is found in the chloroplast thylakoid membrane. Functionally, one of the components of the core complex of photosystem II (PSII). It binds chlorophyll and helps catalyze the primary light-induced photochemical processes of PSII. PSII is a light-driven water:plastoquinone oxidoreductase, using light energy to abstract electrons from H(2)O, generating O(2) and a proton gradient subsequently used for ATP formation. The sequence is that of Photosystem II CP43 reaction center protein from Cicer arietinum (Chickpea).